The chain runs to 450 residues: Phosphoglucosamine mutase (450 aa).

S101 functions as the Phosphoserine intermediate in the catalytic mechanism. S101, D242, D244, and D246 together coordinate Mg(2+). The residue at position 101 (S101) is a Phosphoserine.

This sequence belongs to the phosphohexose mutase family. Mg(2+) serves as cofactor. In terms of processing, activated by phosphorylation.

It carries out the reaction alpha-D-glucosamine 1-phosphate = D-glucosamine 6-phosphate. Functionally, catalyzes the conversion of glucosamine-6-phosphate to glucosamine-1-phosphate. This Rhodopseudomonas palustris (strain TIE-1) protein is Phosphoglucosamine mutase.